The primary structure comprises 552 residues: CTP synthase (552 aa).

Residues 1–270 form an amidoligase domain region; it reads MTKYVFVTGG…DRIICEELKL (270 aa). Residue Ser13 participates in CTP binding. Residue Ser13 coordinates UTP. ATP is bound by residues 14–19 and Asp71; that span reads SLGKGI. Mg(2+)-binding residues include Asp71 and Glu144. Residues 151–153, 191–196, and Lys227 contribute to the CTP site; these read DIE and KTKPTQ. Residues 191–196 and Lys227 contribute to the UTP site; that span reads KTKPTQ. The Glutamine amidotransferase type-1 domain maps to 295 to 547; that stretch reads TIGMVGKYVD…VEAALANKQA (253 aa). Position 356 (Gly356) interacts with L-glutamine. The active-site Nucleophile; for glutamine hydrolysis is Cys383. L-glutamine is bound by residues 384 to 387, Glu407, and Arg473; that span reads LGMQ. Catalysis depends on residues His520 and Glu522.

Belongs to the CTP synthase family. Homotetramer.

The enzyme catalyses UTP + L-glutamine + ATP + H2O = CTP + L-glutamate + ADP + phosphate + 2 H(+). It catalyses the reaction L-glutamine + H2O = L-glutamate + NH4(+). The catalysed reaction is UTP + NH4(+) + ATP = CTP + ADP + phosphate + 2 H(+). The protein operates within pyrimidine metabolism; CTP biosynthesis via de novo pathway; CTP from UDP: step 2/2. Its activity is regulated as follows. Allosterically activated by GTP, when glutamine is the substrate; GTP has no effect on the reaction when ammonia is the substrate. The allosteric effector GTP functions by stabilizing the protein conformation that binds the tetrahedral intermediate(s) formed during glutamine hydrolysis. Inhibited by the product CTP, via allosteric rather than competitive inhibition. Catalyzes the ATP-dependent amination of UTP to CTP with either L-glutamine or ammonia as the source of nitrogen. Regulates intracellular CTP levels through interactions with the four ribonucleotide triphosphates. This is CTP synthase from Burkholderia cenocepacia (strain ATCC BAA-245 / DSM 16553 / LMG 16656 / NCTC 13227 / J2315 / CF5610) (Burkholderia cepacia (strain J2315)).